A 360-amino-acid polypeptide reads, in one-letter code: Phosphoserine aminotransferase (360 aa).

Arginine 42 contacts L-glutamate. Residues 76–77, tryptophan 102, threonine 152, aspartate 171, and glutamine 194 each bind pyridoxal 5'-phosphate; that span reads AS. Lysine 195 is modified (N6-(pyridoxal phosphate)lysine). Position 236–237 (236–237) interacts with pyridoxal 5'-phosphate; sequence NT.

It belongs to the class-V pyridoxal-phosphate-dependent aminotransferase family. SerC subfamily. As to quaternary structure, homodimer. Pyridoxal 5'-phosphate is required as a cofactor.

It localises to the cytoplasm. The catalysed reaction is O-phospho-L-serine + 2-oxoglutarate = 3-phosphooxypyruvate + L-glutamate. The enzyme catalyses 4-(phosphooxy)-L-threonine + 2-oxoglutarate = (R)-3-hydroxy-2-oxo-4-phosphooxybutanoate + L-glutamate. The protein operates within amino-acid biosynthesis; L-serine biosynthesis; L-serine from 3-phospho-D-glycerate: step 2/3. Its function is as follows. Catalyzes the reversible conversion of 3-phosphohydroxypyruvate to phosphoserine and of 3-hydroxy-2-oxo-4-phosphonooxybutanoate to phosphohydroxythreonine. The sequence is that of Phosphoserine aminotransferase from Geobacillus kaustophilus (strain HTA426).